Reading from the N-terminus, the 211-residue chain is ATP phosphoribosyltransferase (211 aa).

Belongs to the ATP phosphoribosyltransferase family. Short subfamily. Heteromultimer composed of HisG and HisZ subunits.

It is found in the cytoplasm. It catalyses the reaction 1-(5-phospho-beta-D-ribosyl)-ATP + diphosphate = 5-phospho-alpha-D-ribose 1-diphosphate + ATP. The protein operates within amino-acid biosynthesis; L-histidine biosynthesis; L-histidine from 5-phospho-alpha-D-ribose 1-diphosphate: step 1/9. In terms of biological role, catalyzes the condensation of ATP and 5-phosphoribose 1-diphosphate to form N'-(5'-phosphoribosyl)-ATP (PR-ATP). Has a crucial role in the pathway because the rate of histidine biosynthesis seems to be controlled primarily by regulation of HisG enzymatic activity. This is ATP phosphoribosyltransferase from Ectopseudomonas mendocina (strain ymp) (Pseudomonas mendocina).